We begin with the raw amino-acid sequence, 145 residues long: Basic phospholipase A2 PC10 (145 aa).

The N-terminal stretch at 1-21 (MYPAHLLLLLAVCVSLLGASA) is a signal peptide. Positions 22–27 (IPPLPL) are excised as a propeptide. Disulfide bonds link C38-C98, C54-C144, C56-C72, C71-C125, C78-C118, C87-C111, and C105-C116. The Ca(2+) site is built by Y55, G57, and G59. H75 is an active-site residue. D76 is a Ca(2+) binding site. D119 is a catalytic residue.

Belongs to the phospholipase A2 family. Group I subfamily. D49 sub-subfamily. It depends on Ca(2+) as a cofactor.

It is found in the secreted. It catalyses the reaction a 1,2-diacyl-sn-glycero-3-phosphocholine + H2O = a 1-acyl-sn-glycero-3-phosphocholine + a fatty acid + H(+). Functionally, PLA2 catalyzes the calcium-dependent hydrolysis of the 2-acyl groups in 3-sn-phosphoglycerides. This is Basic phospholipase A2 PC10 from Laticauda laticaudata (Blue-ringed sea krait).